The following is a 2430-amino-acid chain: MDTGDTALGQKATSRSGETDSVSGRWRQEQSAVLKMSTFSSQEGPRQPQIDPEQIGNAASAQLFGSGKLASPGEGLHQVTEKQYPPHRPSPYPCQHSLSFPQHSLSQGMTHSHKPHQSLEGPPWLFPGPLPSVASEDLFPFPMHGHSGGYPRKKISNLNPAYSQYSQKSIEQAEDAHKKEHKPKKPGKYICPYCSRACAKPSVLKKHIRSHTGERPYPCIPCGFSFKTKSNLYKHRKSHAHAIKAGLVPFTESSVSKLDLEAGFIDVEAEIHSDGEQSTDTDEESSLFAEASDKVSPGPPVPLDIASRGGYHGSLEESLGGPMKVPILIIPKSGIPLASEGSQYLSSEMLPNPSLNAKADDSHTVKQKLALRLSEKKGQDSEPSLNLLSPHSKGSTDSGYFSRSESAEQQISPPNTNAKSYEEIIFGKYCRLSPRNTLSVTPTGQERTAMGRRGIMEPLPHLNTRLEVKMFEDPISQLNPSKGEMDPGQINMLKTTKFNSECRQPQAIPSSVRNEGKPYPGNFLGSNPMLLEAPVDSSPLIRSNSMPTSSATNLSVPPSLRGSHSFDERMTGSDDVFYPGTVGIPPQRMLRRQAAFELPSVQEGHMESEHPARVSKGLASPSLKEKKLLPGDRPGYDYDVCRKPYKKWEDSETLKQSYLGSFKQGGEYFMDPSVPVQGVPTMFGTTCENRKRRKEKSVGDEEDVPMICGGMGNAPVGMMSSEYDPKLQDGGRSGFAMTAHESLAHGHSDRLDPARPQLPSRSPSLGSEDLPLAADPDKMTDLGKKPPGNVISVIQHTNSLSRPNSFERSESTEMVACPQDKTPSPAETCDSEVLEAPVSPEWAPPGDGGESGSKPTPSQQVPQHSYHAQPRLVRQHNIQVPEIRVTEEPDKPEKEKEAPTKEPEKPVEEFQWPQRSETLSQLPAEKLPPKKKRLRLADLEHSSGESSFESTGTGLSRSPSQESNLSHSSSFSMSFDREETVKLTAPPKQDESGKHSEFLTVPAGSYSLSVPGHHHQKEMRRCSSEQMPCPHPTEVPEIRSKSFDYGNLSHAPVAGTSPSTLSPSRERKKCFLVRQASFSGSPEIAQGEAGVDPSVKQEHMEHLHAGLRAAWSSVLPPLPGDDPGKQVGTCGPLSSGPPLHLTQQQIMHMDSQESLRNPLIQPTSYMTSKHLPEQPHLFPHQDAVPFSPIQNALFQFQYPTVCMVHLPAQQPPWWQTHFPHPFAPHPQNSYSKPPFQADLHSSYPLEHVAEHTGKKSADYPHAKEQTYPCYSGTSGLHSKNLPLKFPSDPGSKSTETPTEQLLREDFASENAGPLQSLPGTVVPVRIQTHVPSYGSVMYTSISQILGQNSPAIVICKVDENMTQRTLVTNAAMQGIGLNIAQVLGQHTGLEKYPLWKVPQTLPLGLESSIPLCLPSTSDNAASLGGSKRMLSPASSLELFMETKQQKRVKEEKMYGQIVEELSAVELTNSDIKKGLSRPQKPQLVRQGCASEPKDGCFQSRSSSFSSLSPSSSQDHPSASGPFPPNREILPGSRAPPRRKFSGPSESRESSDELDMDETSSDMSMSPQSSALPTGGGQQEEEGKARKLPVSMLVHMASGPGGNVANSTLLFTDVADFQQILQFPSLRTTTTVSWCFLNYTKPSFVQQATFKSSVYASWCISSCNPNPSGLNTKTTLALLRSKQKITAEIYTLAAMHRPGAGKLTSSSVWKQFAQMKPDAPFLFGNKLERKLAGNVLKERGKGEIHGDKDLGSKQTEPIRIKIFEGGYKSNEDYVYVRGRGRGKYICEECGIRCKKPSMLKKHIRTHTDVRPYVCKLCNFAFKTKGNLTKHMKSKAHMKKCLELGVSMTSVDDTETEEAENMEELHKTSEKHSMSGISTDHQFSDAEESDGEDGDDNDDDDEDDDDFDDQGDLTPKTRSRSTSPQPPRFSSLPVNVGAVAHGVPSDSSLGHSSLISYLVTLPSIQVTQLMTPSDSCDDTQMTEYQRLFQSKSTDSEPDKDRLDIPSSMDEEAMLSSEPSSSPRDFSPSSYRSSPGYDSSPCRDNSPKRYLIPKGDLSPRRHLSPRRDLSPMRHLSPRKEAALRREMSQGDASPRRHLSPRRPLSPGKDITARRDLSPRRERRYMTTIRAPSPRRALYPNPPLSMGQYLQTEPIVLGPPNLRRGIPQVPYFSLYGDQEGAYEHHGSSLFPEGPTDYVFSHLPLHSQQQVRAPIPMVPVGGIQMVHSLPPALSGLHPPPTLPLPTEGSEEKKGAPGEAFAKDPYILSRRHEKQAPQVLQSSGLPSSPSSPRLLMKQSTSEDSLNSTEREQEENIQTCTKAIASLRIATEEAALLGADPPTWVQESPQKPLESAHVSIRHFGGPEPGQPCTSAAHPDLHDGEKDTFGTSQTAVAHPTFYSKSSVDEKRVDFQSSKELSLSTEEGNEPSPEKNQLH.

A disordered region spans residues 1–127 (MDTGDTALGQ…SLEGPPWLFP (127 aa)). Polar residues-rich tracts occupy residues 11-22 (KATSRSGETDSV) and 96-110 (HSLS…QGMT). 2 C2H2-type zinc fingers span residues 189–211 (YICP…IRSH) and 217–239 (YPCI…RKSH). Disordered stretches follow at residues 271-302 (IHSD…PPVP), 374-418 (SEKK…NTNA), and 744-995 (AHGH…SGKH). Polar residues predominate over residues 381–418 (SEPSLNLLSPHSKGSTDSGYFSRSESAEQQISPPNTNA). Basic and acidic residues-rich tracts occupy residues 744–753 (AHGHSDRLDP) and 775–784 (DPDKMTDLGK). Residues 792 to 804 (SVIQHTNSLSRPN) are compositionally biased toward polar residues. Serine 811 is subject to Phosphoserine. Residues 853 to 863 (SKPTPSQQVPQ) are compositionally biased toward polar residues. Over residues 884–908 (RVTEEPDKPEKEKEAPTKEPEKPVE) the composition is skewed to basic and acidic residues. A Nuclear localization signal motif is present at residues 929-935 (PKKKRLR). Residues serine 942, serine 947, serine 1040, serine 1431, and serine 1435 each carry the phosphoserine modification. Low complexity predominate over residues 944-974 (GESSFESTGTGLSRSPSQESNLSHSSSFSMS). Residues 1472 to 1584 (KKGLSRPQKP…GGQQEEEGKA (113 aa)) form a disordered region. 2 stretches are compositionally biased toward low complexity: residues 1499–1520 (SRSS…SASG) and 1560–1569 (SDMSMSPQSS). 2 C2H2-type zinc fingers span residues 1783–1805 (YICE…IRTH) and 1811–1835 (YVCK…SKAH). Disordered stretches follow at residues 1848 to 1931 (SVDD…SSLP) and 1986 to 2117 (FQSK…SPRR). Over residues 1850–1860 (DDTETEEAENM) the composition is skewed to acidic residues. Residues 1861–1871 (EELHKTSEKHS) show a composition bias toward basic and acidic residues. The span at 1883-1909 (DAEESDGEDGDDNDDDDEDDDDFDDQG) shows a compositional bias: acidic residues. Residues 1991-2001 (TDSEPDKDRLD) are compositionally biased toward basic and acidic residues. Low complexity predominate over residues 2013-2037 (SSEPSSSPRDFSPSSYRSSPGYDSS). 10 repeat units span residues 2037-2040 (SPCR), 2043-2046 (SPKR), 2055-2058 (SPRR), 2067-2070 (SPMR), 2073-2076 (SPRK), 2090-2093 (SPRR), 2096-2099 (SPRR), 2102-2105 (SPGK), 2114-2117 (SPRR), and 2129-2132 (SPRR). The segment at 2037–2132 (SPCRDNSPKR…TTIRAPSPRR (96 aa)) is 10 X 4 AA tandem repeats of S-P-[RGMKC]-[RK]. Residues 2062 to 2085 (PRRDLSPMRHLSPRKEAALRREMS) show a composition bias toward basic and acidic residues. Residue serine 2102 is modified to Phosphoserine. A compositionally biased stretch (basic and acidic residues) spans 2107–2116 (ITARRDLSPR). Disordered regions lie at residues 2226–2252 (PALS…GAPG), 2268–2309 (KQAP…QEEN), and 2352–2430 (SIRH…NQLH). Over residues 2271 to 2289 (PQVLQSSGLPSSPSSPRLL) the composition is skewed to low complexity. Phosphoserine is present on residues serine 2281 and serine 2285. Over residues 2291 to 2301 (KQSTSEDSLNS) the composition is skewed to polar residues. The segment covering 2371 to 2380 (PDLHDGEKDT) has biased composition (basic and acidic residues). A compositionally biased stretch (polar residues) spans 2406-2417 (FQSSKELSLSTE). Residues serine 2413 and serine 2415 each carry the phosphoserine modification.

Interacts with TCF4. As to expression, expressed in heart, lung, skeletal muscle and liver. In the brain expressed in cerebral cortex, hippocampus, corpora amygdala and cerebellar cortex.

It localises to the nucleus. In terms of biological role, specifically binds to the DNA sequence 5'-GGGACTTTCC-3' which is found in the enhancer elements of numerous viral promoters such as those of SV40, CMV, or HIV1. In addition, related sequences are found in the enhancer elements of a number of cellular promoters, including those of the class I MHC, interleukin-2 receptor, somatostatin receptor II, and interferon-beta genes. It may act in T-cell activation. This is Transcription factor HIVEP2 (Hivep2) from Mus musculus (Mouse).